The sequence spans 168 residues: Photosystem I assembly protein Ycf3 (168 aa).

TPR repeat units follow at residues 35-68 (AFTYYRDGISAQSEGNYAEALQNYYEAMRLEIDP), 72-105 (SYILYNIGLIHTSNGEHTKALEYYFRALERNSFL), and 120-153 (GEQAIRQGDSEIAEAWFDQAAEYWKQAIALTPGN).

This sequence belongs to the Ycf3 family.

It is found in the plastid. The protein localises to the chloroplast thylakoid membrane. Essential for the assembly of the photosystem I (PSI) complex. May act as a chaperone-like factor to guide the assembly of the PSI subunits. In Jasminum nudiflorum (Winter jasmine), this protein is Photosystem I assembly protein Ycf3.